The primary structure comprises 317 residues: Olfactory receptor 2T27 (317 aa).

At 1–22 (MEQSNYSVYADFILLGLFSNAR) the chain is on the extracellular side. N-linked (GlcNAc...) asparagine glycosylation is present at Asn-5. The helical transmembrane segment at 23–43 (FPWLLFALILLVFLTSIASNV) threads the bilayer. Topologically, residues 44–60 (VKIILIHIDSRLHTPMY) are cytoplasmic. Residues 61-83 (FLLSQLSLRDILYISTIVPKMLV) traverse the membrane as a helical segment. The Extracellular portion of the chain corresponds to 84–97 (DQVMSQRAISFAGC). Cys-97 and Cys-189 are joined by a disulfide. A helical membrane pass occupies residues 98 to 118 (TAQHFLYLTLAGAEFFLLGLM). Over 119 to 139 (SYDRYVAICNPLHYPVLMSRK) the chain is Cytoplasmic. Residues 140-160 (ICWLIVAAAWLGGSIDGFLLT) traverse the membrane as a helical segment. Residues 161–197 (PVTMQFPFCASREINHFFCEVPALLKLSCTDTSAYET) lie on the Extracellular side of the membrane. Residues 198 to 218 (AMYVCCIMMLLIPFSVISGSY) traverse the membrane as a helical segment. At 219-244 (TRILITVYRMSEAEGRGKAVATCSSH) the chain is on the cytoplasmic side. Residues 245-265 (MVVVSLFYGAAMYTYVLPHSY) form a helical membrane-spanning segment. The Extracellular portion of the chain corresponds to 266–271 (HTPEQD). The chain crosses the membrane as a helical span at residues 272–292 (KAVSAFYTILTPMLNPLIYSL). Topologically, residues 293-317 (RNKDVTGALQKVVGRCVSSGKVTTF) are cytoplasmic.

Belongs to the G-protein coupled receptor 1 family.

It is found in the cell membrane. Its function is as follows. Odorant receptor. This chain is Olfactory receptor 2T27 (OR2T27), found in Homo sapiens (Human).